The following is a 698-amino-acid chain: Phenylalanine aminomutase (L-beta-phenylalanine forming) (698 aa).

Y80 acts as the Proton donor/acceptor in catalysis. Residues 175 to 177 constitute a cross-link (5-imidazolinone (Ala-Gly)); that stretch reads ASG. The residue at position 176 (S176) is a 2,3-didehydroalanine (Ser). Positions 231, 319, 325, 355, 427, 455, and 458 each coordinate (E)-cinnamate.

The protein belongs to the PAL/histidase family. Homotetramer. In terms of processing, contains an active site 4-methylidene-imidazol-5-one (MIO), which is formed autocatalytically by cyclization and dehydration of residues Ala-Ser-Gly.

The protein resides in the cytoplasm. The catalysed reaction is L-phenylalanine = L-beta-phenylalanine. The enzyme catalyses L-phenylalanine = (E)-cinnamate + NH4(+). Its pathway is alkaloid biosynthesis; taxol biosynthesis. It participates in phenylpropanoid metabolism; trans-cinnamate biosynthesis; trans-cinnamate from L-phenylalanine: step 1/1. In terms of biological role, phenylalanine aminomutase that catalyzes the rearrangement of L-phenylalanine to R-beta-phenylalanine. Catalyzes the first committed step in the biosynthesis of the side chain of the alkaloid taxol (paclitaxel), a widely-used compound with antitumor activity. Also has low phenylalanine ammonia-lyase activity. The sequence is that of Phenylalanine aminomutase (L-beta-phenylalanine forming) (pam) from Taxus canadensis (Canadian yew).